Here is a 111-residue protein sequence, read N- to C-terminus: Vacuolar ATPase assembly integral membrane protein VMA21 (111 aa).

Residues 1–39 (MATRRIVATEKSILEKDDHIGSSPAAGEKSNITPAVPLD) lie on the Cytoplasmic side of the membrane. The chain crosses the membrane as a helical span at residues 40-60 (VILKLLAFTLAMVVIPIGSYF). Topologically, residues 61 to 73 (VTVNSIFKGNSTY) are lumenal. A helical transmembrane segment spans residues 74–94 (AGALAAIMANVVLVAYVVVAM). The Cytoplasmic portion of the chain corresponds to 95–111 (NEDQTEQEKAKEGKKDR). The short motif at 108–111 (KKDR) is the Prevents secretion from ER element.

It belongs to the VMA21 family.

It localises to the endoplasmic reticulum membrane. Its subcellular location is the endoplasmic reticulum-Golgi intermediate compartment membrane. The protein localises to the cytoplasmic vesicle. The protein resides in the COPII-coated vesicle membrane. Its function is as follows. Required for the assembly of the V0 complex of the vacuolar ATPase (V-ATPase) in the endoplasmic reticulum. This chain is Vacuolar ATPase assembly integral membrane protein VMA21, found in Pyricularia oryzae (strain 70-15 / ATCC MYA-4617 / FGSC 8958) (Rice blast fungus).